A 378-amino-acid chain; its full sequence is Ribosomal RNA large subunit methyltransferase G (378 aa).

This sequence belongs to the methyltransferase superfamily. RlmG family.

The protein resides in the cytoplasm. It catalyses the reaction guanosine(1835) in 23S rRNA + S-adenosyl-L-methionine = N(2)-methylguanosine(1835) in 23S rRNA + S-adenosyl-L-homocysteine + H(+). Specifically methylates the guanine in position 1835 (m2G1835) of 23S rRNA. This is Ribosomal RNA large subunit methyltransferase G from Shigella dysenteriae serotype 1 (strain Sd197).